A 642-amino-acid polypeptide reads, in one-letter code: Acid beta-fructofuranosidase (642 aa).

Over 1–22 (MRNDSPYTPLLNASHNNHRRRE) the chain is Cytoplasmic. Positions 1-95 (MRNDSPYTPL…LSGNLVGEGG (95 aa)) are cleaved as a propeptide — removed in mature form. A helical; Signal-anchor for type II membrane protein membrane pass occupies residues 23-43 (LLLLFSGLLLLASIIAFSAYI). Residues 44 to 642 (AQPHADADVS…YHPDQKRQTS (599 aa)) are Lumenal-facing. Asparagine 100 carries an N-linked (GlcNAc...) asparagine glycan. Residues 119–122 (WMND), glutamine 138, tryptophan 146, 181–182 (WT), and 245–246 (RD) contribute to the substrate site. Aspartate 122 is a catalytic residue. The N-linked (GlcNAc...) asparagine glycan is linked to asparagine 267. Substrate is bound by residues glutamate 300 and aspartate 333. Residues cysteine 490 and cysteine 538 are joined by a disulfide bond. N-linked (GlcNAc...) asparagine glycosylation is found at asparagine 491 and asparagine 615.

This sequence belongs to the glycosyl hydrolase 32 family. As to quaternary structure, may be present in two forms, a 70 kDa monomer and a heterodimer of the 30 kDa and 38 kDa subunits. The ratio of the levels of the two forms within cells appears to be regulated developmentally.

The protein resides in the membrane. Its subcellular location is the vacuole. It localises to the vacuole lumen. The enzyme catalyses Hydrolysis of terminal non-reducing beta-D-fructofuranoside residues in beta-D-fructofuranosides.. It functions in the pathway glycan biosynthesis; sucrose metabolism. This chain is Acid beta-fructofuranosidase (VCINV), found in Vicia faba (Broad bean).